The sequence spans 346 residues: D-alanine--D-alanine ligase (346 aa).

Residues 133–324 (KLYAQSVGVK…IVDNLAKNIE (192 aa)) enclose the ATP-grasp domain. 159–211 (LSFPCILKPARLGSSIGISIVKDESELKYAKDVAFEFDEDVVVEQFVSNIKEY) serves as a coordination point for ATP. Mg(2+)-binding residues include aspartate 284, glutamate 296, and asparagine 298.

The protein belongs to the D-alanine--D-alanine ligase family. Requires Mg(2+) as cofactor. The cofactor is Mn(2+).

It is found in the cytoplasm. It carries out the reaction 2 D-alanine + ATP = D-alanyl-D-alanine + ADP + phosphate + H(+). Its pathway is cell wall biogenesis; peptidoglycan biosynthesis. In terms of biological role, cell wall formation. The chain is D-alanine--D-alanine ligase from Campylobacter lari (strain RM2100 / D67 / ATCC BAA-1060).